The chain runs to 99 residues: Plastocyanin (99 aa).

The Plastocyanin-like domain occupies Val1–Asn99. Positions 37, 84, 87, and 92 each coordinate Cu cation.

Belongs to the plastocyanin family. Requires Cu(2+) as cofactor.

Its subcellular location is the plastid. It is found in the chloroplast thylakoid membrane. Functionally, participates in electron transfer between P700 and the cytochrome b6-f complex in photosystem I. The chain is Plastocyanin (PETE) from Sambucus nigra (European elder).